Reading from the N-terminus, the 448-residue chain is Trigger factor (448 aa).

In terms of domain architecture, PPIase FKBP-type spans 172 to 257; sequence GDRVTVDFVG…MKKIEWPHLP (86 aa).

It belongs to the FKBP-type PPIase family. Tig subfamily.

Its subcellular location is the cytoplasm. It carries out the reaction [protein]-peptidylproline (omega=180) = [protein]-peptidylproline (omega=0). Its function is as follows. Involved in protein export. Acts as a chaperone by maintaining the newly synthesized protein in an open conformation. Functions as a peptidyl-prolyl cis-trans isomerase. This Burkholderia cenocepacia (strain ATCC BAA-245 / DSM 16553 / LMG 16656 / NCTC 13227 / J2315 / CF5610) (Burkholderia cepacia (strain J2315)) protein is Trigger factor.